The chain runs to 73 residues: Large ribosomal subunit protein uL24 (73 aa).

The span at 51–65 (DDNPKGGFIHKEKPM) shows a compositional bias: basic and acidic residues. The segment at 51–73 (DDNPKGGFIHKEKPMHISNVKKA) is disordered.

This sequence belongs to the universal ribosomal protein uL24 family. As to quaternary structure, part of the 50S ribosomal subunit.

Functionally, one of two assembly initiator proteins, it binds directly to the 5'-end of the 23S rRNA, where it nucleates assembly of the 50S subunit. In terms of biological role, one of the proteins that surrounds the polypeptide exit tunnel on the outside of the subunit. This Helicobacter pylori (strain Shi470) protein is Large ribosomal subunit protein uL24.